A 1187-amino-acid chain; its full sequence is MEPNSLQWVGSPCGLHGPYIFYKAFQFHLEGKPRILSLGDFFFVRCTPKDPICIAELQLLWEERTSRQLLSSSKLYFLPEDTPQGRNSDHGEDEVIAVSEKVIVKLEDLVKWVHSDFSKWRCGLQAGAVKTTALGRNGQKEALLKYRQSTLNSGLNFKDVLKEKADLGEDEEETNVIVLSYPQYCRYRSMLKRIQDKPPSILTDQFALALGGIAVVSKNPQILYCRDTFDHPTLIENESICDEFAPNLKGRPRKKKPCPQRRDSFSGVKDSNNNSDGKAVAKVKCEARSALSKPKNNHNNCKKVSNEEKPKVAIGEECRADEQAFLVALYKYMKERKTPIERIPYLGFKQINLWTMFQAAQKLGGYETITARRQWKHIYDELGGNPGSTSAATCTRRHYERLILPYERFIKGEEDKPLPPIKPRKQENSSQENENKTKVSGTKRIKHEIPKSKKEKENAPKPQESPEVSSEPEKEQETSNQKSITEPLPAAEGKRKMEGYQDFAARPVGSRADPEKDSDADRGAGGATAAEEAGEQGPVPPLPSAPAAPDRGPALGPGAGKQPLTSPSAPADSKQEPQPCCFAESPDSEPQEPPFPGFPAAQPPLASQSELEEDKLPAMADYIANCTVKVDQLGSDDIHNALKQTPKVLVVQSFDMFKDKDLTGPMNENHGLNYTPLLYSRGNPGIMSPLAKKKLLSQVSGAGLSGSYPYGSPPPLISKKKLIPRDELCSGLPQAHPGQGSDHAAVSRPSVIQHVQSFRSKASEERKGLGDLFKHDKLGRSEPHRCSFSKHHLGPLADSYALKPDAPEGKDKLLEKRALPHAHVPSFLADFYSSPHLHSLYRHAEHHLHAEQTSKYACRDAYRESENSSFPAHKHQEKLHVNYLASLHLQDKKPAPAEAPADEQPTDLSLPKNLHKPTGKVLGLAHAAPGPQESKGAPQFPAGNGQSRDGHPKACRVSPMTLSAPKKYPEPLSRASRPHHVRLESFRKLEGMVHPVLHRKAGPQAVGAARPIKRGLEDLDLVIAGKKARAVSPLDPPKEACGKDKGAELEGEGGKAAAAHGGPAADGHKAALSSPIFPGLYSGSLCGSGLGSRLPAGYSHSLQYLKNQTVLSPLMQPLAFHSLVMQRGIFTSPTNSQQLYRHLAAATPVGSSYGDLLHNSIYPLAAINPQAAFPASQLSSVHPSTKL.

Residue lysine 130 forms a Glycyl lysine isopeptide (Lys-Gly) (interchain with G-Cter in SUMO2) linkage. Positions arginine 251–alanine 279 are disordered. Serine 264 carries the post-translational modification Phosphoserine. One can recognise an ARID domain in the interval arginine 319–lysine 411. Lysine 337 bears the N6,N6-dimethyllysine mark. Residues glutamate 413–leucine 611 form a disordered region. Residue lysine 446 forms a Glycyl lysine isopeptide (Lys-Gly) (interchain with G-Cter in SUMO2) linkage. Residues histidine 447 to alanine 459 show a composition bias toward basic and acidic residues. Low complexity predominate over residues proline 460–serine 469. Residues lysine 494 and lysine 496 each participate in a glycyl lysine isopeptide (Lys-Gly) (interchain with G-Cter in SUMO2) cross-link. Positions alanine 512–arginine 522 are enriched in basic and acidic residues. Low complexity predominate over residues alanine 527–glycine 537. Residues lysine 767, lysine 774, lysine 803, lysine 810, lysine 893, lysine 916, lysine 920, lysine 935, lysine 988, lysine 1000, and lysine 1013 each participate in a glycyl lysine isopeptide (Lys-Gly) (interchain with G-Cter in SUMO2) cross-link. Residues aspartate 891–arginine 977 are disordered. Residue serine 1032 is modified to Phosphoserine. Positions serine 1032–alanine 1065 are disordered. Basic and acidic residues predominate over residues proline 1036–glutamate 1048. Residues lysine 1055 and lysine 1069 each participate in a glycyl lysine isopeptide (Lys-Gly) (interchain with G-Cter in SUMO2) cross-link. Low complexity predominate over residues lysine 1055 to alanine 1065. Position 1132 is a phosphoserine (serine 1132).

Belongs to the ARID5B family. Post-translationally, methylation at Lys-337 prevents DNA-binding. Demethylation by PHF2 promotes recruitment of the PHF2-ARID5B complex to promoters.

The protein localises to the nucleus. Functionally, transcription coactivator that binds to the 5'-AATA[CT]-3' core sequence and plays a key role in adipogenesis and liver development. Acts by forming a complex with phosphorylated PHF2, which mediates demethylation at Lys-337, leading to target the PHF2-ARID5B complex to target promoters, where PHF2 mediates demethylation of dimethylated 'Lys-9' of histone H3 (H3K9me2), followed by transcription activation of target genes. The PHF2-ARID5B complex acts as a coactivator of HNF4A in liver. Required for adipogenesis: regulates triglyceride metabolism in adipocytes by regulating expression of adipogenic genes. Overexpression leads to induction of smooth muscle marker genes, suggesting that it may also act as a regulator of smooth muscle cell differentiation and proliferation. The sequence is that of AT-rich interactive domain-containing protein 5B (ARID5B) from Canis lupus familiaris (Dog).